Consider the following 227-residue polypeptide: Ribonuclease S-5 (227 aa).

An N-terminal signal peptide occupies residues Met1–Gly27. Gln36 provides a ligand contact to RNA. Cys42 and Cys49 are joined by a disulfide. The N-linked (GlcNAc...) asparagine glycan is linked to Asn45. RNA-binding positions include His60, Asn97 to Val98, Phe107, Lys110 to Glu111, and Lys114 to His115. His60 serves as the catalytic Proton donor. Cysteines 75 and 118 form a disulfide. Glu111 is a catalytic residue. His115 serves as the catalytic Proton acceptor. A glycan (N-linked (GlcNAc...) asparagine) is linked at Asn143. 2 disulfides stabilise this stretch: Cys182–Cys220 and Cys197–Cys208.

The protein belongs to the RNase T2 family. Post-translationally, N-glycan at Asn-45 consists of disaccharide (GlcNAc-GlcNAc). N-linked core structure at Asn-143 contains xylose.

The enzyme catalyses a ribonucleotidyl-ribonucleotide-RNA + H2O = a 3'-end 3'-phospho-ribonucleotide-RNA + a 5'-end dephospho-ribonucleoside-RNA + H(+). Its function is as follows. Self-incompatibility (SI) is the inherited ability of a flowering plant to prevent self-fertilization by discriminating between self and non-self pollen during pollination. In many species, self-incompatibility is controlled by the single, multiallelic locus S. The chain is Ribonuclease S-5 from Pyrus pyrifolia (Chinese pear).